The primary structure comprises 404 residues: O-antigen ligase (404 aa).

The next 11 membrane-spanning stretches (helical) occupy residues 16–32 (IWNK…YFLD), 39–55 (HLII…QVSR), 67–84 (SVFY…YSIL), 96–115 (FENT…PVLL), 127–147 (VLFS…ILYI), 168–183 (SMVF…WLFR), 189–221 (LVFL…GVLW), 228–246 (WKLI…ALVI), 324–343 (ILYI…VYLY), 363–379 (YNAH…FYIV), and 385–401 (QVDI…LLAL).

Belongs to the O-antigen ligase family.

It is found in the cell inner membrane. It catalyses the reaction a lipid-linked O antigen + a lipid A-core oligosaccharide = a lipopolysaccharide + a polyisoprenyl diphosphate.. It participates in bacterial outer membrane biogenesis; lipopolysaccharide biosynthesis. Functionally, transferase involved in the biosynthesis of the lipopolysaccharide (LPS). Catalyzes the transfer of a polymerized O-antigen molecule from its polyprenyl diphosphate membrane anchor to a terminal sugar of the lipid A-core oligosaccharide, finalizing the biosynthesis of the lipopolysaccharide. May also be involved in a feedback mechanism to regulate O-unit synthesis, based on the availability of O units on the periplasmic face of the membrane. The sequence is that of O-antigen ligase from Salmonella typhimurium (strain LT2 / SGSC1412 / ATCC 700720).